Here is a 206-residue protein sequence, read N- to C-terminus: Probable GTP-binding protein EngB (206 aa).

An EngB-type G domain is found at 27-201 (SGIEVAFAGR…EEKLNQWYSK (175 aa)). GTP contacts are provided by residues 35–42 (GRSNAGKS), 62–66 (GRTQL), 80–83 (DLPG), 147–150 (TKAD), and 180–182 (FSS). Residues Ser-42 and Thr-64 each contribute to the Mg(2+) site.

It belongs to the TRAFAC class TrmE-Era-EngA-EngB-Septin-like GTPase superfamily. EngB GTPase family. The cofactor is Mg(2+).

Necessary for normal cell division and for the maintenance of normal septation. This Idiomarina loihiensis (strain ATCC BAA-735 / DSM 15497 / L2-TR) protein is Probable GTP-binding protein EngB.